The sequence spans 147 residues: Lysozyme C, intestinal isozyme (147 aa).

The first 18 residues, 1–18 (MKAVLILGLLLLSVTVQG), serve as a signal peptide directing secretion. The C-type lysozyme domain maps to 19–147 (KKFEKCELAR…VSSYIRGCKL (129 aa)). 4 disulfides stabilise this stretch: cysteine 24–cysteine 145, cysteine 48–cysteine 133, cysteine 83–cysteine 99, and cysteine 95–cysteine 113. Residues glutamate 53 and aspartate 71 contribute to the active site.

The protein belongs to the glycosyl hydrolase 22 family.

It carries out the reaction Hydrolysis of (1-&gt;4)-beta-linkages between N-acetylmuramic acid and N-acetyl-D-glucosamine residues in a peptidoglycan and between N-acetyl-D-glucosamine residues in chitodextrins.. Lysozymes have primarily a bacteriolytic function; those in tissues and body fluids are associated with the monocyte-macrophage system and enhance the activity of immunoagents. The chain is Lysozyme C, intestinal isozyme from Bos taurus (Bovine).